A 477-amino-acid polypeptide reads, in one-letter code: MKVTVENKKGLNKDIKVFIDKETMNSYMDEKYEEIKKTVNLKGFRPGKVPKEVLKRQFGQAIFSEVLDKVLKDTSVKALEDNKIKPAGQPKLDLKTYGEDKDLEYVMSITELPKVELKSVENIKFDEYSVKIDTNETDKRIKEIAKSQNNFKEVAADVRAVEENLVIFDYKATIDGKDFTGGEGKNTQLILGKDLFIKGFDKQLIGVKKNDEKSVDVTLPENYPQKEYANKKANFICKITEVKKSEEVKIDDVFAKNLGAKDLADLKVLVSKQINDEYKNSLDKLAKTQILKEIENFKVDEIPENLIEEEVKILSQGMTEEDSKKSRKNFEEIAKKRIKVGLILNEFGEQNKIKVTEQEVQAEVQKQLRMMPGQEKMVMEFYQKNPSALASLRGTVYEEKIIDLIKTKAKPSKKEISKEEAEKILKEHQKQDHNHEHDHNHDHDHPEEKKASKSTKIEKKPKPSASKKPSTKKVSKK.

The PPIase FKBP-type domain maps to 163–248 (ENLVIFDYKA…ITEVKKSEEV (86 aa)). The segment covering 408-461 (KAKPSKKEISKEEAEKILKEHQKQDHNHEHDHNHDHDHPEEKKASKSTKIEKKP) has biased composition (basic and acidic residues). The segment at 408–477 (KAKPSKKEIS…KPSTKKVSKK (70 aa)) is disordered.

It belongs to the FKBP-type PPIase family. Tig subfamily.

The protein localises to the cytoplasm. It carries out the reaction [protein]-peptidylproline (omega=180) = [protein]-peptidylproline (omega=0). Its function is as follows. Involved in protein export. Acts as a chaperone by maintaining the newly synthesized protein in an open conformation. Functions as a peptidyl-prolyl cis-trans isomerase. The protein is Trigger factor of Pelagibacter ubique (strain HTCC1062).